Reading from the N-terminus, the 608-residue chain is Developmental regulatory protein wetA (608 aa).

Disordered regions lie at residues 54 to 88 (ADHH…GVST), 102 to 125 (VDAT…VDPR), 146 to 186 (VSMS…MTRK), 202 to 226 (SKLR…NPPR), 309 to 352 (WPHQ…HAVP), 447 to 544 (AQTY…GDIG), and 556 to 576 (LMTG…EREA). Composition is skewed to low complexity over residues 77–88 (ESTASASSGVST), 107–119 (PSQP…PGAS), and 163–175 (SSPG…SQPS). Basic residues predominate over residues 313–338 (QHPHPHPHPHHPQAHTHPHPHPHPHP). Composition is skewed to low complexity over residues 339 to 350 (HQQAVAGHPQHA) and 502 to 517 (SSNG…SGRG).

The protein belongs to the wetA family.

Its function is as follows. AbaA and wetA are pivotal regulators of conidiophore development and conidium maturation. They act individually and together to regulate their own expression and that of numerous other sporulation-specific genes. Functions to maintain conidial dormancy by suppressing microcycle conidiation. In Gibberella zeae (strain ATCC MYA-4620 / CBS 123657 / FGSC 9075 / NRRL 31084 / PH-1) (Wheat head blight fungus), this protein is Developmental regulatory protein wetA.